Here is a 99-residue protein sequence, read N- to C-terminus: DNA-directed RNA polymerase subunit omega (99 aa).

The protein belongs to the RNA polymerase subunit omega family. In terms of assembly, the RNAP catalytic core consists of 2 alpha, 1 beta, 1 beta' and 1 omega subunit. When a sigma factor is associated with the core the holoenzyme is formed, which can initiate transcription.

It catalyses the reaction RNA(n) + a ribonucleoside 5'-triphosphate = RNA(n+1) + diphosphate. In terms of biological role, promotes RNA polymerase assembly. Latches the N- and C-terminal regions of the beta' subunit thereby facilitating its interaction with the beta and alpha subunits. The protein is DNA-directed RNA polymerase subunit omega of Deinococcus geothermalis (strain DSM 11300 / CIP 105573 / AG-3a).